Reading from the N-terminus, the 218-residue chain is Sulfite reductase, assimilatory-type (218 aa).

[4Fe-4S] cluster-binding residues include Cys-91, Cys-97, Cys-131, and Cys-135. Cys-135 serves as a coordination point for siroheme.

Its function is as follows. This enzyme catalyzes the 6-electron reduction of sulfite to sulfide. This is one of several activities required for the biosynthesis of L-cysteine from sulfate. This is Sulfite reductase, assimilatory-type from Nitratidesulfovibrio vulgaris (strain ATCC 29579 / DSM 644 / CCUG 34227 / NCIMB 8303 / VKM B-1760 / Hildenborough) (Desulfovibrio vulgaris).